A 582-amino-acid chain; its full sequence is MKYRTHKCNELSLDHVGEHVRLSGWVHRYRNHGGVVFIDLRDRFGITQIVCRQEENPELHQLMDQVRSEWVLCVEGLVCARLEGMENPNLVTGSIEVEVSSLEVLSRAQNLPFSISDEHINVNEELRLTYRYLDMRRGDILDRLMCRHKVMLACRQYLDEQGFTEVVTPILGKSTPEGARDYLVPSRIYPGNFYALPQSPQLFKQILMVGGLDRYFQIATCFRDEDLRADRQPEFTQIDMEMSFGGPEDLFPVVEELVTRLFAVKGIELKAPFLRMTYQEAKDSYGTDKPDLRFGLRLKNCCEYARKFTFSIFLDQLAHGGTVKGFCVPGGADMSRKQLDIYTDFVKRYGSMGLVWIKKQDGGVSSNVAKFASEDVFQEMFEAFEAKDQDILLLIAAPEAVANQALDHLRRLIAKERQLYDSTQYNFVWITDFPLFAKEEGELCPEHHPFTAPLDEDISLLDSDPFAVRSSSYDLVLNGYEIASGSQRIHNPDLQNKIFALLKLSQESVKEKFGFFIDALSFGTPPHLGIALGLDRIMMVLTGAETIREVIAFPKTQKAGDLMMSAPSEILPIQLKELGLKL.

An L-aspartate-binding site is contributed by E177. Residues 201–204 (QLFK) are aspartate. R223 serves as a coordination point for L-aspartate. ATP contacts are provided by residues 223–225 (RDE) and Q232. H447 provides a ligand contact to L-aspartate. Position 481 (E481) interacts with ATP. R488 lines the L-aspartate pocket. 533–536 (GLDR) is a binding site for ATP.

Belongs to the class-II aminoacyl-tRNA synthetase family. Type 1 subfamily. In terms of assembly, homodimer.

The protein localises to the cytoplasm. It catalyses the reaction tRNA(Asx) + L-aspartate + ATP = L-aspartyl-tRNA(Asx) + AMP + diphosphate. Its function is as follows. Aspartyl-tRNA synthetase with relaxed tRNA specificity since it is able to aspartylate not only its cognate tRNA(Asp) but also tRNA(Asn). Reaction proceeds in two steps: L-aspartate is first activated by ATP to form Asp-AMP and then transferred to the acceptor end of tRNA(Asp/Asn). This Chlamydia trachomatis serovar L2 (strain ATCC VR-902B / DSM 19102 / 434/Bu) protein is Aspartate--tRNA(Asp/Asn) ligase.